A 773-amino-acid polypeptide reads, in one-letter code: E3 ubiquitin-protein ligase RFWD3 (773 aa).

4 disordered regions span residues 18–67, 92–117, 139–230, and 259–279; these read VAEQ…SQVG, RVEN…IPVS, LRPP…EEVV, and GETL…SVSK. Serine 47 is subject to Phosphoserine; by ATM and ATR. A compositionally biased stretch (low complexity) spans 50-59; sequence APPLLQPAPA. Serine 64 is subject to Phosphoserine; by ATM and ATR. The segment covering 151–164 has biased composition (basic residues); it reads RSRRRRGSASRRSR. Residues 186–205 are compositionally biased toward polar residues; it reads VSRTQPHLPSMSQDSETRNP. Residues 207–221 show a composition bias toward low complexity; that stretch reads SEDLQVSSSSSSDSE. The segment covering 263 to 273 has biased composition (polar residues); that stretch reads PKQSPQKTNPL. An RING-type; degenerate zinc finger spans residues 287–331; it reads CTICFEHWTNAGDHRLSALRCGHLFGYKCISKWLKGQARKCPQCN. Residues 361 to 403 are a coiled coil; it reads SLLKEQMLRKQAELESAQCRLQLQVLTDECSKLHSRVQDLQKL. WD repeat units follow at residues 494-536, 538-576, and 582-627; these read MHGK…QTYN, GRPV…SHIQ, and KARC…SHWP.

In terms of assembly, interacts with MDM2 and p53/TP53. Binds to the RPA complex via direct interaction with RPA2. Interacts with RAD51. Phosphorylated at Ser-46 and Ser-63 upon DNA damage by ATM or ATR. ATM phosphorylation occurs at early times upon DNA damage, while ATR is the major kinase at later times. Phosphorylation by ATM and ATR is required to stabilize p53/TP53. Part of the phosphorylation depends upon RPA2 presence.

The protein resides in the nucleus. It localises to the PML body. It is found in the cytoplasm. The enzyme catalyses S-ubiquitinyl-[E2 ubiquitin-conjugating enzyme]-L-cysteine + [acceptor protein]-L-lysine = [E2 ubiquitin-conjugating enzyme]-L-cysteine + N(6)-ubiquitinyl-[acceptor protein]-L-lysine.. It functions in the pathway protein modification; protein ubiquitination. In terms of biological role, E3 ubiquitin-protein ligase required for the repair of DNA interstrand cross-links (ICL) in response to DNA damage. Plays a key role in RPA-mediated DNA damage signaling and repair. Acts by mediating ubiquitination of the RPA complex (RPA1, RPA2 and RPA3 subunits) and RAD51 at stalled replication forks, leading to remove them from DNA damage sites and promote homologous recombination. Also mediates the ubiquitination of p53/TP53 in the late response to DNA damage, and acts as a positive regulator of p53/TP53 stability, thereby regulating the G1/S DNA damage checkpoint. May act by catalyzing the formation of short polyubiquitin chains on p53/TP53 that are not targeted to the proteasome. In response to ionizing radiation, interacts with MDM2 and enhances p53/TP53 ubiquitination, possibly by restricting MDM2 from extending polyubiquitin chains on ubiquitinated p53/TP53. Required to translesion DNA synthesis across DNA-protein cross-link adducts by catalyzing ubiquitination of proteins on single-stranded DNA (ssDNA). In Ailuropoda melanoleuca (Giant panda), this protein is E3 ubiquitin-protein ligase RFWD3 (RFWD3).